Here is a 351-residue protein sequence, read N- to C-terminus: L-threonine 3-dehydrogenase (351 aa).

Zn(2+) is bound at residue Cys-42. Residues Thr-44 and His-47 each act as charge relay system in the active site. Zn(2+)-binding residues include His-67, Glu-68, Cys-97, Cys-100, Cys-103, and Cys-111. Residues Ile-179, Asp-199, Arg-204, 266 to 268, and 291 to 292 contribute to the NAD(+) site; these read LGL and IT.

Belongs to the zinc-containing alcohol dehydrogenase family. Homotetramer. The cofactor is Zn(2+).

It is found in the cytoplasm. It catalyses the reaction L-threonine + NAD(+) = (2S)-2-amino-3-oxobutanoate + NADH + H(+). It participates in amino-acid degradation; L-threonine degradation via oxydo-reductase pathway; glycine from L-threonine: step 1/2. Catalyzes the NAD(+)-dependent oxidation of L-threonine to 2-amino-3-ketobutyrate. This Symbiobacterium thermophilum (strain DSM 24528 / JCM 14929 / IAM 14863 / T) protein is L-threonine 3-dehydrogenase.